The primary structure comprises 234 residues: Small ribosomal subunit protein eS4 (234 aa).

In terms of domain architecture, S4 RNA-binding spans 37–99 (VPLLIVLRDV…REEYYRVFPG (63 aa)).

This sequence belongs to the eukaryotic ribosomal protein eS4 family.

The polypeptide is Small ribosomal subunit protein eS4 (rps4e) (Haloarcula marismortui (strain ATCC 43049 / DSM 3752 / JCM 8966 / VKM B-1809) (Halobacterium marismortui)).